A 215-amino-acid chain; its full sequence is Large ribosomal subunit protein bL25 (215 aa).

Residues 190-215 (VLTDAEEETDETPEEPEAIRQKGDEE) are disordered. The segment covering 193 to 205 (DAEEETDETPEEP) has biased composition (acidic residues). Basic and acidic residues predominate over residues 206-215 (EAIRQKGDEE).

This sequence belongs to the bacterial ribosomal protein bL25 family. CTC subfamily. In terms of assembly, part of the 50S ribosomal subunit; part of the 5S rRNA/L5/L18/L25 subcomplex. Contacts the 5S rRNA. Binds to the 5S rRNA independently of L5 and L18.

In terms of biological role, this is one of the proteins that binds to the 5S RNA in the ribosome where it forms part of the central protuberance. The polypeptide is Large ribosomal subunit protein bL25 (Maricaulis maris (strain MCS10) (Caulobacter maris)).